The sequence spans 276 residues: Large ribosomal subunit protein uL2 (276 aa).

The disordered stretch occupies residues 219–276 (TVRGSVMNPNDHPHGGGEGRSPIGRPSPVTPWGKPALGYKTRKKNKASNKLIVSRRTK). Residues 258–276 (KTRKKNKASNKLIVSRRTK) show a composition bias toward basic residues.

This sequence belongs to the universal ribosomal protein uL2 family. As to quaternary structure, part of the 50S ribosomal subunit. Forms a bridge to the 30S subunit in the 70S ribosome.

Its function is as follows. One of the primary rRNA binding proteins. Required for association of the 30S and 50S subunits to form the 70S ribosome, for tRNA binding and peptide bond formation. It has been suggested to have peptidyltransferase activity; this is somewhat controversial. Makes several contacts with the 16S rRNA in the 70S ribosome. The chain is Large ribosomal subunit protein uL2 from Clostridioides difficile (strain 630) (Peptoclostridium difficile).